A 65-amino-acid chain; its full sequence is Metallothionein-like protein type 3 (65 aa).

It belongs to the metallothionein superfamily. Type 15 family.

Its function is as follows. Metallothioneins have a high content of cysteine residues that bind various heavy metals. This chain is Metallothionein-like protein type 3, found in Musa acuminata (Banana).